We begin with the raw amino-acid sequence, 362 residues long: UDP-N-acetylglucosamine--N-acetylmuramyl-(pentapeptide) pyrophosphoryl-undecaprenol N-acetylglucosamine transferase (362 aa).

The UDP-N-acetyl-alpha-D-glucosamine site is built by Arg166, Ser196, and Gln290.

Belongs to the glycosyltransferase 28 family. MurG subfamily.

The protein resides in the cell membrane. The catalysed reaction is Mur2Ac(oyl-L-Ala-gamma-D-Glu-L-Lys-D-Ala-D-Ala)-di-trans,octa-cis-undecaprenyl diphosphate + UDP-N-acetyl-alpha-D-glucosamine = beta-D-GlcNAc-(1-&gt;4)-Mur2Ac(oyl-L-Ala-gamma-D-Glu-L-Lys-D-Ala-D-Ala)-di-trans,octa-cis-undecaprenyl diphosphate + UDP + H(+). The protein operates within cell wall biogenesis; peptidoglycan biosynthesis. In terms of biological role, cell wall formation. Catalyzes the transfer of a GlcNAc subunit on undecaprenyl-pyrophosphoryl-MurNAc-pentapeptide (lipid intermediate I) to form undecaprenyl-pyrophosphoryl-MurNAc-(pentapeptide)GlcNAc (lipid intermediate II). This chain is UDP-N-acetylglucosamine--N-acetylmuramyl-(pentapeptide) pyrophosphoryl-undecaprenol N-acetylglucosamine transferase, found in Staphylococcus carnosus (strain TM300).